A 139-amino-acid chain; its full sequence is Ribulose bisphosphate carboxylase small subunit (139 aa).

Belongs to the RuBisCO small chain family. As to quaternary structure, heterohexadecamer of 8 large and 8 small subunits.

The protein localises to the plastid. It is found in the chloroplast. Its function is as follows. RuBisCO catalyzes two reactions: the carboxylation of D-ribulose 1,5-bisphosphate, the primary event in carbon dioxide fixation, as well as the oxidative fragmentation of the pentose substrate in the photorespiration process. Both reactions occur simultaneously and in competition at the same active site. Although the small subunit is not catalytic it is essential for maximal activity. In Ectocarpus siliculosus (Brown alga), this protein is Ribulose bisphosphate carboxylase small subunit.